The sequence spans 500 residues: Glycerol kinase (500 aa).

Residue Thr13 coordinates ADP. 3 residues coordinate ATP: Thr13, Thr14, and Ser15. Thr13 is a binding site for sn-glycerol 3-phosphate. Arg17 contacts ADP. Residues Arg83, Glu84, Tyr136, and Asp246 each contribute to the sn-glycerol 3-phosphate site. Arg83, Glu84, Tyr136, Asp246, and Gln247 together coordinate glycerol. The ADP site is built by Thr268 and Gly311. 4 residues coordinate ATP: Thr268, Gly311, Gln315, and Gly412. Residues Gly412 and Asn416 each contribute to the ADP site.

Belongs to the FGGY kinase family.

It catalyses the reaction glycerol + ATP = sn-glycerol 3-phosphate + ADP + H(+). It participates in polyol metabolism; glycerol degradation via glycerol kinase pathway; sn-glycerol 3-phosphate from glycerol: step 1/1. Its activity is regulated as follows. Inhibited by fructose 1,6-bisphosphate (FBP). Functionally, key enzyme in the regulation of glycerol uptake and metabolism. Catalyzes the phosphorylation of glycerol to yield sn-glycerol 3-phosphate. This chain is Glycerol kinase, found in Francisella tularensis subsp. novicida (strain U112).